The sequence spans 391 residues: Formate-dependent phosphoribosylglycinamide formyltransferase (391 aa).

N(1)-(5-phospho-beta-D-ribosyl)glycinamide-binding positions include 20–21 (EL) and Glu-80. ATP-binding positions include Arg-112, Lys-153, 158-163 (SSGKGQ), 193-196 (EGFI), and Glu-201. In terms of domain architecture, ATP-grasp spans 117-306 (RLAAETLGLP…EFALHVRAIL (190 aa)). Residues Glu-265 and Glu-277 each coordinate Mg(2+). N(1)-(5-phospho-beta-D-ribosyl)glycinamide is bound by residues Asp-284, Lys-354, and 361–362 (RR).

Belongs to the PurK/PurT family. Homodimer.

The enzyme catalyses N(1)-(5-phospho-beta-D-ribosyl)glycinamide + formate + ATP = N(2)-formyl-N(1)-(5-phospho-beta-D-ribosyl)glycinamide + ADP + phosphate + H(+). Its pathway is purine metabolism; IMP biosynthesis via de novo pathway; N(2)-formyl-N(1)-(5-phospho-D-ribosyl)glycinamide from N(1)-(5-phospho-D-ribosyl)glycinamide (formate route): step 1/1. Functionally, involved in the de novo purine biosynthesis. Catalyzes the transfer of formate to 5-phospho-ribosyl-glycinamide (GAR), producing 5-phospho-ribosyl-N-formylglycinamide (FGAR). Formate is provided by PurU via hydrolysis of 10-formyl-tetrahydrofolate. In Shewanella sp. (strain ANA-3), this protein is Formate-dependent phosphoribosylglycinamide formyltransferase.